We begin with the raw amino-acid sequence, 276 residues long: Radial spoke head protein 9 homolog (276 aa).

The protein belongs to the flagellar radial spoke RSP9 family. Component of the axonemal radial spoke 1 (RS1) and 2 (RS2) complexes, at least composed of spoke head proteins RSPH1, RSPH3, RSPH9 and the cilia-specific component RSPH4A or sperm-specific component RSPH6A, spoke stalk proteins RSPH14, DNAJB13, DYDC1, ROPN1L and NME5, and the RS1 complex-specific anchor protein IQUB. Interacts with IQUB. Interacts with RSPH3B. Interacts with RSPH4A. Interacts with RSPH6A. Interacts with CFAP61. Interacts with LRRC23.

It localises to the cytoplasm. It is found in the cytoskeleton. The protein localises to the cilium axoneme. Its subcellular location is the flagellum axoneme. The protein resides in the cell projection. It localises to the kinocilium. Its function is as follows. Functions as part of axonemal radial spoke complexes that play an important part in the motility of sperm and cilia. Essential for both the radial spoke head assembly and the central pair microtubule stability in ependymal motile cilia. Required for motility of olfactory and neural cilia and for the structural integrity of ciliary axonemes in both 9+0 and 9+2 motile cilia. In Homo sapiens (Human), this protein is Radial spoke head protein 9 homolog (RSPH9).